We begin with the raw amino-acid sequence, 858 residues long: Translation initiation factor IF-2 (858 aa).

The segment at 59-147 (KEHAEKRRER…GKKLEGQERK (89 aa)) is disordered. In terms of domain architecture, tr-type G spans 361 to 530 (PRPPVVVVMG…LLVADLLELK (170 aa)). The segment at 370–377 (GHVDHGKT) is G1. 370-377 (GHVDHGKT) lines the GTP pocket. Residues 395–399 (GITQH) are G2. Residues 416-419 (DTPG) are G3. Residues 416–420 (DTPGH) and 470–473 (NKID) each bind GTP. The interval 470–473 (NKID) is G4. The segment at 506 to 508 (SAK) is G5.

This sequence belongs to the TRAFAC class translation factor GTPase superfamily. Classic translation factor GTPase family. IF-2 subfamily.

It localises to the cytoplasm. Functionally, one of the essential components for the initiation of protein synthesis. Protects formylmethionyl-tRNA from spontaneous hydrolysis and promotes its binding to the 30S ribosomal subunits. Also involved in the hydrolysis of GTP during the formation of the 70S ribosomal complex. This is Translation initiation factor IF-2 from Caldicellulosiruptor saccharolyticus (strain ATCC 43494 / DSM 8903 / Tp8T 6331).